Reading from the N-terminus, the 611-residue chain is MPAYRSRTTTHGRNMAGARGLWRATGMKDSDFGKPIIAVVNSFTQFVPGHVHLKDLGQLVAREIEAAGGVAKEFNTIAVDDGIAMGHDGMLYSLPSREIIADSVEYMVNAHCADAMVCISNCDKITPGMLNAAMRLNIPAVFVSGGPMEAGKVVLHGKTVALDLVDAMVAAADDKISDEDVKIIERSACPTCGSCSGMFTANSMNCLTEALGLSLPGNGSTLATHSDRKRLFVEAGHLIVDLARRYYEQDDETVLPRTIANKAAFENAMSLDIAMGGSTNTVLHILAAAHEGGVDFGMEDIDRLSRKVPCLSKVAPAKQDVHMEDVHRAGGIMRILGELERGGLINRDTYTVHEATLGDAIDRWDITRTNSEMVRQFFKAAPGGVPTQVAFSQSSRWDDLDTDSDNGVIRSVEKPFSKDGGLAVLYGNIALDGCIVKTAGVDESILKFNGSAVVYESQDAAVKGILGNEVKAGDVVVIRYEGPKGGPGMQEMLYPTSYLKSKGLGKACALITDGRFSGGTSGLSIGHASPEAAQGGAIGLVRQGDLIEIDIPNRTINLKVSDAELAARRAEQEEKGWKPEAPRKRNVTTALKAYAAFASSADKGAVRILPE.

Asp81 is a binding site for Mg(2+). [2Fe-2S] cluster is bound at residue Cys122. The Mg(2+) site is built by Asp123 and Lys124. N6-carboxylysine is present on Lys124. Cys195 provides a ligand contact to [2Fe-2S] cluster. Residue Glu491 coordinates Mg(2+). The active-site Proton acceptor is the Ser517.

The protein belongs to the IlvD/Edd family. As to quaternary structure, homodimer. [2Fe-2S] cluster serves as cofactor. It depends on Mg(2+) as a cofactor.

It carries out the reaction (2R)-2,3-dihydroxy-3-methylbutanoate = 3-methyl-2-oxobutanoate + H2O. It catalyses the reaction (2R,3R)-2,3-dihydroxy-3-methylpentanoate = (S)-3-methyl-2-oxopentanoate + H2O. It participates in amino-acid biosynthesis; L-isoleucine biosynthesis; L-isoleucine from 2-oxobutanoate: step 3/4. The protein operates within amino-acid biosynthesis; L-valine biosynthesis; L-valine from pyruvate: step 3/4. Its function is as follows. Functions in the biosynthesis of branched-chain amino acids. Catalyzes the dehydration of (2R,3R)-2,3-dihydroxy-3-methylpentanoate (2,3-dihydroxy-3-methylvalerate) into 2-oxo-3-methylpentanoate (2-oxo-3-methylvalerate) and of (2R)-2,3-dihydroxy-3-methylbutanoate (2,3-dihydroxyisovalerate) into 2-oxo-3-methylbutanoate (2-oxoisovalerate), the penultimate precursor to L-isoleucine and L-valine, respectively. In Agrobacterium fabrum (strain C58 / ATCC 33970) (Agrobacterium tumefaciens (strain C58)), this protein is Dihydroxy-acid dehydratase.